A 509-amino-acid polypeptide reads, in one-letter code: Lysine--tRNA ligase (509 aa).

Residues glutamate 418 and glutamate 425 each coordinate Mg(2+).

This sequence belongs to the class-II aminoacyl-tRNA synthetase family. As to quaternary structure, homodimer. Mg(2+) serves as cofactor.

It is found in the cytoplasm. The enzyme catalyses tRNA(Lys) + L-lysine + ATP = L-lysyl-tRNA(Lys) + AMP + diphosphate. The chain is Lysine--tRNA ligase from Acinetobacter baumannii (strain AB307-0294).